Reading from the N-terminus, the 189-residue chain is dCTP deaminase, dUMP-forming (189 aa).

Residues 101 to 106 (KSSLGR), Asp119, 127 to 129 (TLE), Gln148, Tyr162, and Gln174 each bind dCTP. The active-site Proton donor/acceptor is the Glu129. A disordered region spans residues 166–189 (AVGSKYQGQRGPTPSRSHLNFIKS). Positions 171 to 189 (YQGQRGPTPSRSHLNFIKS) are enriched in polar residues.

This sequence belongs to the dCTP deaminase family. In terms of assembly, homotrimer.

The catalysed reaction is dCTP + 2 H2O = dUMP + NH4(+) + diphosphate. Its pathway is pyrimidine metabolism; dUMP biosynthesis; dUMP from dCTP: step 1/1. Functionally, bifunctional enzyme that catalyzes both the deamination of dCTP to dUTP and the hydrolysis of dUTP to dUMP without releasing the toxic dUTP intermediate. The sequence is that of dCTP deaminase, dUMP-forming from Mycolicibacterium smegmatis (strain ATCC 700084 / mc(2)155) (Mycobacterium smegmatis).